A 180-amino-acid polypeptide reads, in one-letter code: Inner membrane-spanning protein YciB (180 aa).

The next 5 membrane-spanning stretches (helical) occupy residues 25–45, 49–69, 76–96, 118–138, and 150–170; these read QNAT…CYII, VSKL…ITLI, IKIK…MSGI, ITLS…NEIV, and FKVF…LPLL.

This sequence belongs to the YciB family.

It is found in the cell inner membrane. Its function is as follows. Plays a role in cell envelope biogenesis, maintenance of cell envelope integrity and membrane homeostasis. This Rickettsia akari (strain Hartford) protein is Inner membrane-spanning protein YciB.